The chain runs to 512 residues: Ammonium transporter 2 (512 aa).

Residues 1–47 (MSSVNSIPTATSTVYISVLPATATPSGGSGGNVLHEDLNKFYDYGNT) are Extracellular-facing. The helical transmembrane segment at 48-68 (SWILACTPLCLIMVPGVAFFY) threads the bilayer. At 69-77 (SGLARRKNT) the chain is on the cytoplasmic side. A helical membrane pass occupies residues 78–98 (LALIMLSMLGLCVSFFQWYFW). Residues 99–137 (GYSLAFSQTGTSGYIGNLRHFAFIRTLADYSPGSNNIPE) lie on the Extracellular side of the membrane. The helical transmembrane segment at 138–158 (LVFANFQGMFAAITVALFTGA) threads the bilayer. Topologically, residues 159 to 167 (AAERGRIGP) are cytoplasmic. A helical transmembrane segment spans residues 168-188 (MLIITFVWLTVVYCPIACWIW). The Extracellular portion of the chain corresponds to 189–201 (NPNGWAFKFGVYD). A helical transmembrane segment spans residues 202–222 (FAGGGPVEVGSGFAALAYTVC). The Cytoplasmic segment spans residues 223–238 (LGRRSKFVEEQFRPHS). A helical transmembrane segment spans residues 239–259 (VLNVVLGTSLLWFGWLGFNGG). The Extracellular segment spans residues 260-267 (SAYGSNLR). Residues 268-288 (AAMAITNTNLAGAVAGLVWVI) traverse the membrane as a helical segment. Topologically, residues 289-300 (YDYIFRTRKWST) are cytoplasmic. Residues 301-321 (IGFCSGVVAGLVAATPCAGFV) traverse the membrane as a helical segment. Residue S322 is a topological domain, extracellular. A helical membrane pass occupies residues 323 to 343 (PHASLAIGAITGLCCNWAIKL). Topologically, residues 344–354 (KSHMRIDDAMD) are cytoplasmic. The chain crosses the membrane as a helical span at residues 355–375 (IFAIHGVAGFVGTFLNGLFAV). The Extracellular segment spans residues 376–406 (DYIAAMDGIYVGENKIRGGWFDHHWRQLGLQ). Residues 407–427 (MAYICAVGAYDFVVTFIILFI) form a helical membrane-spanning segment. Residues 428 to 512 (TDKIPYLQLR…TNPLELGLTI (85 aa)) lie on the Cytoplasmic side of the membrane.

The protein belongs to the ammonia transporter channel (TC 1.A.11.2) family.

The protein resides in the membrane. Transporter for ammonium to use as a nitrogen source. In Schizosaccharomyces pombe (strain 972 / ATCC 24843) (Fission yeast), this protein is Ammonium transporter 2 (amt2).